The sequence spans 193 residues: Ion-translocating oxidoreductase complex subunit A (193 aa).

Transmembrane regions (helical) follow at residues 5–25, 47–67, 72–92, 102–122, 134–154, and 171–191; these read LLLFVGTVLVNNFVLVKFLGL, FVMTLASICAWLIDTWILIPL, LRTLAFILVIAVVVQFTEMVV, LLGIFLPLITTNCAVLGVALL, ALYGFSAAVGFSLVMVLFAAI, and AIALITAGLMSLAFMGFSGLV.

It belongs to the NqrDE/RnfAE family. In terms of assembly, the complex is composed of six subunits: RnfA, RnfB, RnfC, RnfD, RnfE and RnfG.

The protein localises to the cell inner membrane. Functionally, part of a membrane-bound complex that couples electron transfer with translocation of ions across the membrane. This chain is Ion-translocating oxidoreductase complex subunit A, found in Citrobacter koseri (strain ATCC BAA-895 / CDC 4225-83 / SGSC4696).